A 349-amino-acid polypeptide reads, in one-letter code: Sphingomyelinase D (349 aa).

An N-terminal signal peptide occupies residues 1 to 18; sequence MLLSSLISLALLSSQVVA. Residue His52 is part of the active site. Residues Glu72, Asp74, and Asp123 each contribute to the Mg(2+) site. The short motif at 310-317 is the SMD-tail element; the sequence is ATNDNNPW.

The protein belongs to the sphingomyelinase D/phospholipase D family. Mg(2+) serves as cofactor.

The protein resides in the secreted. It carries out the reaction a sphingomyelin + H2O = an N-acylsphing-4-enine 1-phosphate + choline + H(+). In terms of biological role, catalyzes the hydrolysis of sphingomyelin. Sphingomyelinases D are produced by some spider in their venoms, but also by arthropods such as ticks, or pathogenic bacteria and fungi. They might play a role in pathogenicity through different mechanisms, such as membrane destabilization and host cell penetration, but also pulmonary inflammation and cutaneous lesions. In Uncinocarpus reesii (strain UAMH 1704), this protein is Sphingomyelinase D.